We begin with the raw amino-acid sequence, 492 residues long: 3-octaprenyl-4-hydroxybenzoate carboxy-lyase (492 aa).

Asparagine 175 serves as a coordination point for Mn(2+). Prenylated FMN is bound by residues 178–180 (IYR), 192–194 (RWL), and 197–198 (RG). Glutamate 241 lines the Mn(2+) pocket. Residue aspartate 290 is the Proton donor of the active site.

It belongs to the UbiD family. As to quaternary structure, homohexamer. It depends on prenylated FMN as a cofactor. Mn(2+) is required as a cofactor.

The protein resides in the cell membrane. It carries out the reaction a 4-hydroxy-3-(all-trans-polyprenyl)benzoate + H(+) = a 2-(all-trans-polyprenyl)phenol + CO2. The protein operates within cofactor biosynthesis; ubiquinone biosynthesis. In terms of biological role, catalyzes the decarboxylation of 3-octaprenyl-4-hydroxy benzoate to 2-octaprenylphenol, an intermediate step in ubiquinone biosynthesis. In Salmonella choleraesuis (strain SC-B67), this protein is 3-octaprenyl-4-hydroxybenzoate carboxy-lyase.